Here is a 366-residue protein sequence, read N- to C-terminus: Alanine racemase (366 aa).

Lys40 functions as the Proton acceptor; specific for D-alanine in the catalytic mechanism. Residue Lys40 is modified to N6-(pyridoxal phosphate)lysine. Arg136 provides a ligand contact to substrate. Catalysis depends on Tyr263, which acts as the Proton acceptor; specific for L-alanine. Residue Met310 participates in substrate binding.

The protein belongs to the alanine racemase family. It depends on pyridoxal 5'-phosphate as a cofactor.

The enzyme catalyses L-alanine = D-alanine. The protein operates within amino-acid biosynthesis; D-alanine biosynthesis; D-alanine from L-alanine: step 1/1. Its function is as follows. Catalyzes the interconversion of L-alanine and D-alanine. May also act on other amino acids. This Streptococcus pyogenes serotype M5 (strain Manfredo) protein is Alanine racemase (alr).